Consider the following 322-residue polypeptide: 3-hydroxyacyl-CoA dehydrogenase FVEG_12628 (322 aa).

Residues 5 to 25 (IRTVAIVGCGVIGMGWAVLFL) form a helical membrane-spanning segment. The For hydroxyacyl-coenzyme A dehydrogenase activity role is filled by Glu151.

This sequence belongs to the 3-hydroxyacyl-CoA dehydrogenase family.

It is found in the membrane. Functionally, 3-hydroxyacyl-CoA dehydrogenase; part of the Fusarium detoxification of benzoxazolinone cluster 2 (FDB2) involved in the degradation of benzoxazolinones produced by the host plant. Maize, wheat, and rye produce the 2 benzoxazinone phytoanticipins 2,4-dihy-droxy-7-methoxy-1,4-benzoxazin-3-one (DIMBOA) and 2,4-dihydroxy-1,4-benzoxazin-3-one (DIBOA) that, due to their inherent instability once released, spontaneously degrade to the more stable corresponding benzoxazolinones, 6-methoxy-2-benzoxazolinone (MBOA) and 2-benzoxazolinone (BOA), respectively. The first step in the detoxification of benzoxazolinones involves the hydrolysis of the cyclic ester bond of benzoxazolinones by the FDB1 cluster gamma-lactamase MBL1 to aminophenols. MBL1 is able to convert BOA into 2-aminophenol (2-AP), as well as MBOA into 5-methoxy-2-aminophenol (2-AMP). The FDB2 cluster N-malonyltransferase FDB2/NAT1 then metabolizes aminophenols via N-malonylation to non-toxic malonamic acids. FDB2/NAT1 converts 2-AP into N-(2-hydroxyphenyl) malonamic acid (HPMA) and 2-AMP into N-(2-hydroxy-4-methoxyphenyl) malonamic acid (HMPMA). The duplicated dienlactone hydrolases DLH1 and DLH2 may provide redundant function for hydrolyzing the lactone moiety in the BOA molecule. The roles of the amidases an other enzymes encoded by the 2 FDB clusters have not been identified so far. In Gibberella moniliformis (strain M3125 / FGSC 7600) (Maize ear and stalk rot fungus), this protein is 3-hydroxyacyl-CoA dehydrogenase FVEG_12628.